Reading from the N-terminus, the 353-residue chain is Photosystem II protein D1 (353 aa).

At threonine 2 the chain carries N-acetylthreonine. The residue at position 2 (threonine 2) is a Phosphothreonine. Transmembrane regions (helical) follow at residues 29–46 (YIGWFGVLMIPTLLTATS), 118–133 (HFLLGVACYMGREWEL), and 142–156 (WIAVAYSAPVAAATA). Residue histidine 118 coordinates chlorophyll a. Tyrosine 126 lines the pheophytin a pocket. Residues aspartate 170 and glutamate 189 each contribute to the [CaMn4O5] cluster site. The chain crosses the membrane as a helical span at residues 197 to 218 (FHMLGVAGVFGGSLFSAMHGSL). Histidine 198 serves as a coordination point for chlorophyll a. A quinone contacts are provided by residues histidine 215 and 264–265 (SF). Histidine 215 contributes to the Fe cation binding site. Residue histidine 272 coordinates Fe cation. A helical transmembrane segment spans residues 274–288 (FLAAWPVVGIWFTAL). [CaMn4O5] cluster-binding residues include histidine 332, glutamate 333, aspartate 342, and alanine 344. The propeptide occupies 345 to 353 (ALEVPSLNG).

This sequence belongs to the reaction center PufL/M/PsbA/D family. PSII is composed of 1 copy each of membrane proteins PsbA, PsbB, PsbC, PsbD, PsbE, PsbF, PsbH, PsbI, PsbJ, PsbK, PsbL, PsbM, PsbT, PsbX, PsbY, PsbZ, Psb30/Ycf12, at least 3 peripheral proteins of the oxygen-evolving complex and a large number of cofactors. It forms dimeric complexes. Requires The D1/D2 heterodimer binds P680, chlorophylls that are the primary electron donor of PSII, and subsequent electron acceptors. It shares a non-heme iron and each subunit binds pheophytin, quinone, additional chlorophylls, carotenoids and lipids. D1 provides most of the ligands for the Mn4-Ca-O5 cluster of the oxygen-evolving complex (OEC). There is also a Cl(-1) ion associated with D1 and D2, which is required for oxygen evolution. The PSII complex binds additional chlorophylls, carotenoids and specific lipids. as cofactor. In terms of processing, tyr-161 forms a radical intermediate that is referred to as redox-active TyrZ, YZ or Y-Z. C-terminally processed by CTPA; processing is essential to allow assembly of the oxygen-evolving complex and thus photosynthetic growth.

Its subcellular location is the plastid. It is found in the chloroplast thylakoid membrane. It carries out the reaction 2 a plastoquinone + 4 hnu + 2 H2O = 2 a plastoquinol + O2. In terms of biological role, photosystem II (PSII) is a light-driven water:plastoquinone oxidoreductase that uses light energy to abstract electrons from H(2)O, generating O(2) and a proton gradient subsequently used for ATP formation. It consists of a core antenna complex that captures photons, and an electron transfer chain that converts photonic excitation into a charge separation. The D1/D2 (PsbA/PsbD) reaction center heterodimer binds P680, the primary electron donor of PSII as well as several subsequent electron acceptors. In Oryza nivara (Indian wild rice), this protein is Photosystem II protein D1.